The following is a 258-amino-acid chain: Glucanase inhibitor protein 1 (258 aa).

Positions 1 to 19 (MRVVPTLAAASLALGAVAG) are cleaved as a signal peptide. The Peptidase S1 domain maps to 27 to 254 (ILGGGEVPIG…AIEWITSVTK (228 aa)). Cysteines 54 and 70 form a disulfide. Asn-87, Asn-102, Asn-107, Asn-157, and Asn-185 each carry an N-linked (GlcNAc...) asparagine glycan. 2 disulfides stabilise this stretch: Cys-177-Cys-189 and Cys-199-Cys-230.

Belongs to the peptidase S1 family. As to quaternary structure, forms an apoplastic complex with host endoglucanases in tomato leaves during P.infestans infection.

It localises to the secreted. Secreted effector that suppresses host plant glucan elicitor-mediated defense responses. Targets host endoglucanases and inhibits the endoglucanase-mediated release of elicitor-active glucan oligosaccharides from P.infestans cell walls. In Phytophthora infestans (Potato late blight agent), this protein is Glucanase inhibitor protein 1.